The following is a 352-amino-acid chain: Ferrochelatase (352 aa).

Positions 222 and 303 each coordinate Fe cation.

The protein belongs to the ferrochelatase family.

Its subcellular location is the cytoplasm. It carries out the reaction heme b + 2 H(+) = protoporphyrin IX + Fe(2+). Its pathway is porphyrin-containing compound metabolism; protoheme biosynthesis; protoheme from protoporphyrin-IX: step 1/1. In terms of biological role, catalyzes the ferrous insertion into protoporphyrin IX. The sequence is that of Ferrochelatase from Brucella canis (strain ATCC 23365 / NCTC 10854 / RM-666).